Reading from the N-terminus, the 244-residue chain is Nodulation protein G (244 aa).

Residue 11-35 coordinates NAD(+); that stretch reads VTGASGAIGGAIARVLHAQGAIVGL. Residue serine 139 participates in substrate binding. Tyrosine 152 serves as the catalytic Proton acceptor.

It belongs to the short-chain dehydrogenases/reductases (SDR) family.

In terms of biological role, proposed to modify Nod factor fatty acyl chain. This Rhizobium meliloti (Ensifer meliloti) protein is Nodulation protein G (nodG).